The following is a 544-amino-acid chain: Inward rectifier potassium channel irk-1 (544 aa).

At 1–109 (MTLSVPDCAE…IFTTMIDVKW (109 aa)) the chain is on the cytoplasmic side. Residues 110–134 (RWMLMLFASAFVLSWSIFGTTYYLI) form a helical membrane-spanning segment. Residues 135–158 (ALVHGDLSLPTPVNHTACVMNLDS) are Extracellular-facing. Residues 159–170 (VYSSFLFAVETH) constitute an intramembrane region (helical; Pore-forming). Positions 171–177 (HTIGYGH) form an intramembrane region, pore-forming. The short motif at 172 to 177 (TIGYGH) is the Selectivity filter element. Residues 178–186 (RYITTECYL) lie on the Extracellular side of the membrane. The chain crosses the membrane as a helical span at residues 187 to 208 (AGAIVCLQAICALLLQSFMVGI). The Cytoplasmic segment spans residues 209–544 (VFAKMARPKK…PIHIEIVSET (336 aa)). 2 disordered regions span residues 411–448 (HKLE…NSPV) and 512–533 (LSDL…SPPV). Over residues 438–448 (NHFQSSSNSPV) the composition is skewed to polar residues.

Belongs to the inward rectifier-type potassium channel (TC 1.A.2.1) family. Expressed in neurons in the head and tail with no expression detected in non-neuronal cells in these regions. Also detected in the egg-laying system of adult hermaphordites with strong expression in the HSN motor neurons and weak expression in vulval muscles.

It is found in the membrane. The protein resides in the perikaryon. It localises to the cell projection. Functionally, inward rectifier potassium channels are characterized by a greater tendency to allow potassium to flow into the cell rather than out of it. Required for modulation of the activity of the hermaphrodite-specific neurons (HSNs) by the G-protein coupled neuropeptide receptor egl-6 which in turn controls egg-laying behavior. The protein is Inward rectifier potassium channel irk-1 (irk-1) of Caenorhabditis elegans.